Here is a 397-residue protein sequence, read N- to C-terminus: Enoyl-[acyl-carrier-protein] reductase [NADH] (397 aa).

NAD(+)-binding positions include 48–53 (GASTGY), 74–75 (FE), 111–112 (DA), and 139–140 (VA). Substrate is bound at residue Tyr225. Catalysis depends on Tyr235, which acts as the Proton donor. NAD(+) is bound by residues Lys244 and 273–275 (VVT).

This sequence belongs to the TER reductase family. Monomer.

The enzyme catalyses a 2,3-saturated acyl-[ACP] + NAD(+) = a (2E)-enoyl-[ACP] + NADH + H(+). It functions in the pathway lipid metabolism; fatty acid biosynthesis. Functionally, involved in the final reduction of the elongation cycle of fatty acid synthesis (FAS II). Catalyzes the reduction of a carbon-carbon double bond in an enoyl moiety that is covalently linked to an acyl carrier protein (ACP). The polypeptide is Enoyl-[acyl-carrier-protein] reductase [NADH] (Burkholderia pseudomallei (strain K96243)).